Consider the following 325-residue polypeptide: Gibberellin 20-oxidase-like protein (325 aa).

The Fe2OG dioxygenase domain maps to 152 to 266 (CHGYFRINNY…RFSLAFFWCF (115 aa)). H186, D188, and H244 together coordinate Fe cation. Residue R257 coordinates 2-oxoglutarate.

This sequence belongs to the iron/ascorbate-dependent oxidoreductase family. GA20OX subfamily. Fe(2+) is required as a cofactor. Highly expressed in elongation zone of lateral roots.

Functionally, negative regulator of root hair growth. The polypeptide is Gibberellin 20-oxidase-like protein (Arabidopsis thaliana (Mouse-ear cress)).